Consider the following 230-residue polypeptide: Ropporin-1-like protein (230 aa).

One can recognise an RIIa domain in the interval 17 to 54; the sequence is PELPDILKQFTKAAIRTQPADVLQWSAGYFSALSRGDP.

Belongs to the ropporin family. As to quaternary structure, component of the axonemal radial spoke complex 1 (RS1), at least composed of spoke head proteins RSPH1, RSPH3, RSPH9 and the cilia-specific component RSPH4A or sperm-specific component RSPH6A, spoke stalk proteins RSPH14, DNAJB13, DYDC1, ROPN1L and NME5, and the anchor protein IQUB. May interact with AKAP3. Interacts with FSCB; the interaction increases upon spermatozoa capacitation conditions. Interacts with CFAP61. Post-translationally, sumoylated, sumoylation decreases upon spermatozoa capacitation conditions.

The protein localises to the cell projection. The protein resides in the cilium. It localises to the flagellum. In terms of biological role, functions as part of axonemal radial spoke complexes that play an important part in the motility of sperm and cilia. Important for male fertility. With ROPN1, involved in fibrous sheath integrity and sperm motility, plays a role in PKA-dependent signaling processes required for spermatozoa capacitation. The chain is Ropporin-1-like protein (ROPN1L) from Macaca fascicularis (Crab-eating macaque).